Consider the following 249-residue polypeptide: MEMGRRIHLELRNRTPSDVKELVLDNSRSNEGKLEGLTDEFEELEFLSTINVGLTSIANLPKLNKLKKLELSDNRVSGGLEVLAEKCPNLTHLNLSGNKIKDLSTIEPLKKLENLKSLDLFNCEVTNLNDYRENVFKLLPQLTYLDGYDRDDKEAPDSDAEGYVEGLDDEEEDEDEEEYDEDAQVVEDEEDEDEEEEGEEEDVSGEEEEDEEGYNDGEVDDEEDEEELGEEERGQKRKREPEDEGEDDD.

T15 is subject to Phosphothreonine. S17 is modified (phosphoserine). 4 LRR repeats span residues 18-38 (DVKELVLDNSRSNEGKLEGLT), 43-64 (ELEFLSTINVGLTSIANLPKLN), 65-87 (KLKKLELSDNRVSGGLEVLAEKC), and 89-110 (NLTHLNLSGNKIKDLSTIEPLK). Residues 123–161 (CEVTNLNDYRENVFKLLPQLTYLDGYDRDDKEAPDSDAE) enclose the LRRCT domain. A compositionally biased stretch (basic and acidic residues) spans 147 to 156 (GYDRDDKEAP). Residues 147–249 (GYDRDDKEAP…EPEDEGEDDD (103 aa)) form a disordered region. Residues 150 to 174 (RDDKEAPDSDAEGYVEGLDDEEEDE) are necessary for tumor-suppressive function. Residues 157–230 (DSDAEGYVEG…DEEDEEELGE (74 aa)) are compositionally biased toward acidic residues. Residues S158 and S204 each carry the phosphoserine; by CK2 modification. The tract at residues 165–249 (EGLDDEEEDE…EPEDEGEDDD (85 aa)) is interaction with E4F1.

This sequence belongs to the ANP32 family. As to quaternary structure, component of the SET complex, composed of at least ANP32A, APEX1, HMGB2, NME1, SET and TREX1. Directly interacts with SET. Interacts with ATXN1/SCA1. Interacts with MAP1B. Interacts with ELAVL1. Part of the INHAT (inhibitor of histone acetyltransferases) complex. Interacts with E4F1. In terms of assembly, (Microbial infection) Interacts (via C-terminus) with influenza virus A protein PB2; this interaction promotes viral replication. (Microbial infection) Interacts (via C-terminus) with influenza virus B protein PB2; this interaction promotes viral replication. As to quaternary structure, (Microbial infection) Interacts (via C-terminus) with influenza virus C protein PB2; this interaction promotes viral replication by bridging viral replicase dimers together. Post-translationally, phosphorylated on serine residues, at least in part by casein kinase 2/CK2. The N-terminus is blocked. In terms of processing, some glutamate residues are glycylated by TTLL8. This modification occurs exclusively on glutamate residues and results in a glycine chain on the gamma-carboxyl group. Expressed in all tissues tested. Highly expressed in kidney and skeletal muscle, moderate levels of expression in brain, placenta and pancreas, and weakly expressed in lung. Found in all regions of the brain examined (amygdala, caudate nucleus, corpus callosum, hippocampus and thalamus), with highest levels in amygdala.

The protein resides in the nucleus. It is found in the cytoplasm. Its subcellular location is the endoplasmic reticulum. Multifunctional protein that is involved in the regulation of many processes including tumor suppression, apoptosis, cell cycle progression or transcription. Promotes apoptosis by favouring the activation of caspase-9/CASP9 and allowing apoptosome formation. In addition, plays a role in the modulation of histone acetylation and transcription as part of the INHAT (inhibitor of histone acetyltransferases) complex. Inhibits the histone-acetyltranferase activity of EP300/CREBBP (CREB-binding protein) and EP300/CREBBP-associated factor by histone masking. Preferentially binds to unmodified histone H3 and sterically inhibiting its acetylation and phosphorylation leading to cell growth inhibition. Participates in other biochemical processes such as regulation of mRNA nuclear-to-cytoplasmic translocation and stability by its association with ELAVL1 (Hu-antigen R). Plays a role in E4F1-mediated transcriptional repression as well as inhibition of protein phosphatase 2A. In terms of biological role, (Microbial infection) Plays an essential role in influenza A, B and C viral genome replication. Mechanistically, mediates the assembly of the viral replicase asymmetric dimers composed of PB1, PB2 and PA via its N-terminal region. Also plays an essential role in foamy virus mRNA export from the nucleus. The sequence is that of Acidic leucine-rich nuclear phosphoprotein 32 family member A (ANP32A) from Homo sapiens (Human).